A 303-amino-acid polypeptide reads, in one-letter code: D-alanine--D-alanine ligase (303 aa).

Residues 99-293 form the ATP-grasp domain; that stretch reads TYRFLKGTVE…FEELVEIILK (195 aa). 125 to 176 serves as a coordination point for ATP; that stretch reads GYPCVVKPRREGSSIGVFVCESDEEFQHALKEDLPRYGSVIVQKYIPGREMT. 3 residues coordinate Mg(2+): D248, E260, and N262.

It belongs to the D-alanine--D-alanine ligase family. Mg(2+) is required as a cofactor. Requires Mn(2+) as cofactor.

The protein localises to the cytoplasm. The enzyme catalyses 2 D-alanine + ATP = D-alanyl-D-alanine + ADP + phosphate + H(+). It participates in cell wall biogenesis; peptidoglycan biosynthesis. Functionally, cell wall formation. The polypeptide is D-alanine--D-alanine ligase (Thermotoga maritima (strain ATCC 43589 / DSM 3109 / JCM 10099 / NBRC 100826 / MSB8)).